Here is a 107-residue protein sequence, read N- to C-terminus: Phosphoribosyl-ATP pyrophosphatase (107 aa).

The protein belongs to the PRA-PH family.

The protein resides in the cytoplasm. It catalyses the reaction 1-(5-phospho-beta-D-ribosyl)-ATP + H2O = 1-(5-phospho-beta-D-ribosyl)-5'-AMP + diphosphate + H(+). Its pathway is amino-acid biosynthesis; L-histidine biosynthesis; L-histidine from 5-phospho-alpha-D-ribose 1-diphosphate: step 2/9. The protein is Phosphoribosyl-ATP pyrophosphatase of Sinorhizobium medicae (strain WSM419) (Ensifer medicae).